Here is a 194-residue protein sequence, read N- to C-terminus: Protein GrpE (194 aa).

This sequence belongs to the GrpE family. As to quaternary structure, homodimer.

Its subcellular location is the cytoplasm. Functionally, participates actively in the response to hyperosmotic and heat shock by preventing the aggregation of stress-denatured proteins, in association with DnaK and GrpE. It is the nucleotide exchange factor for DnaK and may function as a thermosensor. Unfolded proteins bind initially to DnaJ; upon interaction with the DnaJ-bound protein, DnaK hydrolyzes its bound ATP, resulting in the formation of a stable complex. GrpE releases ADP from DnaK; ATP binding to DnaK triggers the release of the substrate protein, thus completing the reaction cycle. Several rounds of ATP-dependent interactions between DnaJ, DnaK and GrpE are required for fully efficient folding. The chain is Protein GrpE from Aliivibrio fischeri (strain MJ11) (Vibrio fischeri).